We begin with the raw amino-acid sequence, 178 residues long: Protein GrpE (178 aa).

Belongs to the GrpE family. As to quaternary structure, homodimer.

It localises to the cytoplasm. Participates actively in the response to hyperosmotic and heat shock by preventing the aggregation of stress-denatured proteins, in association with DnaK and GrpE. It is the nucleotide exchange factor for DnaK and may function as a thermosensor. Unfolded proteins bind initially to DnaJ; upon interaction with the DnaJ-bound protein, DnaK hydrolyzes its bound ATP, resulting in the formation of a stable complex. GrpE releases ADP from DnaK; ATP binding to DnaK triggers the release of the substrate protein, thus completing the reaction cycle. Several rounds of ATP-dependent interactions between DnaJ, DnaK and GrpE are required for fully efficient folding. This is Protein GrpE from Rickettsia africae (strain ESF-5).